The sequence spans 498 residues: ATP synthase subunit beta, chloroplastic (498 aa).

Position 172–179 (172–179 (GGAGVGKT)) interacts with ATP.

Belongs to the ATPase alpha/beta chains family. In terms of assembly, F-type ATPases have 2 components, CF(1) - the catalytic core - and CF(0) - the membrane proton channel. CF(1) has five subunits: alpha(3), beta(3), gamma(1), delta(1), epsilon(1). CF(0) has four main subunits: a(1), b(1), b'(1) and c(9-12).

It localises to the plastid. Its subcellular location is the chloroplast thylakoid membrane. The enzyme catalyses ATP + H2O + 4 H(+)(in) = ADP + phosphate + 5 H(+)(out). In terms of biological role, produces ATP from ADP in the presence of a proton gradient across the membrane. The catalytic sites are hosted primarily by the beta subunits. The protein is ATP synthase subunit beta, chloroplastic of Brasenia schreberi (Water shield).